The sequence spans 304 residues: MSNVLELKIPASTANLGVGFDSIGMALDKFLHLSVKETSGTKWEYIFHDDASKQLPTDETNFIYHVAQQVAAKYSVDLPNLCIEMRSDIPLARGLGSSASALVGAIYIANYFGDIQLSKHEVLQLATEIEGHPDNVAPTIYGGLISGYYNDVSKETSVAHIDIPDVDVIVTIPTYELKTEASRRALPQKLTHSEAVKSSAISNTMICALAQHNYELAGKLMQQDGFHEPYRQHLIAEFDEVKTIASQHNAYATVISGAGPTILIFSRKENSGELVRALNRNVVTCHSELVDINVSGVKERIVYQ.

90–100 (PLARGLGSSAS) serves as a coordination point for ATP.

It belongs to the GHMP kinase family. Homoserine kinase subfamily.

Its subcellular location is the cytoplasm. The catalysed reaction is L-homoserine + ATP = O-phospho-L-homoserine + ADP + H(+). It participates in amino-acid biosynthesis; L-threonine biosynthesis; L-threonine from L-aspartate: step 4/5. Its function is as follows. Catalyzes the ATP-dependent phosphorylation of L-homoserine to L-homoserine phosphate. In Staphylococcus aureus (strain bovine RF122 / ET3-1), this protein is Homoserine kinase.